We begin with the raw amino-acid sequence, 474 residues long: tRNA-2-methylthio-N(6)-dimethylallyladenosine synthase (474 aa).

The region spanning 3 to 120 (KKLHIKTWGC…LPDMIEQVRR (118 aa)) is the MTTase N-terminal domain. 6 residues coordinate [4Fe-4S] cluster: Cys12, Cys49, Cys83, Cys157, Cys161, and Cys164. Positions 143–375 (RAEGPTAFVS…QDRITQQAMR (233 aa)) constitute a Radical SAM core domain. Residues 378 to 441 (RHMMGTVQRI…TNSLRGKFIR (64 aa)) form the TRAM domain.

The protein belongs to the methylthiotransferase family. MiaB subfamily. As to quaternary structure, monomer. The cofactor is [4Fe-4S] cluster.

The protein resides in the cytoplasm. The enzyme catalyses N(6)-dimethylallyladenosine(37) in tRNA + (sulfur carrier)-SH + AH2 + 2 S-adenosyl-L-methionine = 2-methylsulfanyl-N(6)-dimethylallyladenosine(37) in tRNA + (sulfur carrier)-H + 5'-deoxyadenosine + L-methionine + A + S-adenosyl-L-homocysteine + 2 H(+). Catalyzes the methylthiolation of N6-(dimethylallyl)adenosine (i(6)A), leading to the formation of 2-methylthio-N6-(dimethylallyl)adenosine (ms(2)i(6)A) at position 37 in tRNAs that read codons beginning with uridine. The chain is tRNA-2-methylthio-N(6)-dimethylallyladenosine synthase from Shewanella sp. (strain MR-7).